A 219-amino-acid chain; its full sequence is Maleylacetoacetate isomerase (219 aa).

The region spanning 4–87 is the GST N-terminal domain; it reads NKTVLYSYWR…YLEETHPENP (84 aa). Residues 14–19, Gln-45, 71–72, Gln-111, and 115–117 each bind glutathione; these read SSCSWR, QS, and NLK. The GST C-terminal domain maps to 92–217; that stretch reads GSYERAIARQ…LPQNQPDAEP (126 aa).

This sequence belongs to the GST superfamily. Zeta family. Requires glutathione as cofactor.

It carries out the reaction 4-maleylacetoacetate = 4-fumarylacetoacetate. It functions in the pathway amino-acid degradation; L-phenylalanine degradation; acetoacetate and fumarate from L-phenylalanine: step 5/6. This Dictyostelium discoideum (Social amoeba) protein is Maleylacetoacetate isomerase (mai).